Here is a 452-residue protein sequence, read N- to C-terminus: Probable 1,4-beta-D-glucan cellobiohydrolase A (452 aa).

A signal peptide spans 1 to 17 (MHQRALLFSALAVAANA). N-linked (GlcNAc...) asparagine glycosylation is present at N81. E226 (nucleophile) is an active-site residue. E231 acts as the Proton donor in catalysis. N284 carries N-linked (GlcNAc...) asparagine glycosylation. Residues 406-432 (DPSKPGVARGTCEHGAGDPEKVESQHP) form a disordered region. Residues 416–431 (TCEHGAGDPEKVESQH) show a composition bias toward basic and acidic residues.

The protein belongs to the glycosyl hydrolase 7 (cellulase C) family.

The protein localises to the secreted. The enzyme catalyses Hydrolysis of (1-&gt;4)-beta-D-glucosidic linkages in cellulose and cellotetraose, releasing cellobiose from the non-reducing ends of the chains.. The biological conversion of cellulose to glucose generally requires three types of hydrolytic enzymes: (1) Endoglucanases which cut internal beta-1,4-glucosidic bonds; (2) Exocellobiohydrolases that cut the disaccharide cellobiose from the non-reducing end of the cellulose polymer chain; (3) Beta-1,4-glucosidases which hydrolyze the cellobiose and other short cello-oligosaccharides to glucose. The sequence is that of Probable 1,4-beta-D-glucan cellobiohydrolase A (cbhA) from Neosartorya fischeri (strain ATCC 1020 / DSM 3700 / CBS 544.65 / FGSC A1164 / JCM 1740 / NRRL 181 / WB 181) (Aspergillus fischerianus).